A 229-amino-acid chain; its full sequence is 3,4-dihydroxy-2-butanone 4-phosphate synthase (229 aa).

D-ribulose 5-phosphate contacts are provided by residues 28–29 (RE), Asp33, 164–168 (RGGHT), and Glu188. Glu29 provides a ligand contact to Mg(2+). Position 167 (His167) interacts with Mg(2+).

Belongs to the DHBP synthase family. Homodimer. It depends on Mg(2+) as a cofactor. Mn(2+) serves as cofactor.

It catalyses the reaction D-ribulose 5-phosphate = (2S)-2-hydroxy-3-oxobutyl phosphate + formate + H(+). The protein operates within cofactor biosynthesis; riboflavin biosynthesis; 2-hydroxy-3-oxobutyl phosphate from D-ribulose 5-phosphate: step 1/1. Functionally, catalyzes the conversion of D-ribulose 5-phosphate to formate and 3,4-dihydroxy-2-butanone 4-phosphate. The protein is 3,4-dihydroxy-2-butanone 4-phosphate synthase of Methanothermobacter thermautotrophicus (strain ATCC 29096 / DSM 1053 / JCM 10044 / NBRC 100330 / Delta H) (Methanobacterium thermoautotrophicum).